The sequence spans 769 residues: ATP-dependent RNA helicase MAK5 (769 aa).

Residues lysine 73–aspartate 82 show a composition bias toward basic and acidic residues. Disordered regions lie at residues lysine 73 to leucine 99 and serine 114 to aspartate 140. A compositionally biased stretch (acidic residues) spans aspartate 83–leucine 99. The residue at position 135 (threonine 135) is a Phosphothreonine. Position 138 is a phosphoserine (serine 138). The Q motif signature appears at glutamate 167–lysine 195. Positions isoleucine 198–arginine 395 constitute a Helicase ATP-binding domain. ATP is bound at residue alanine 211–threonine 218. A DEAD box motif is present at residues aspartate 329 to aspartate 332. Residues aspartate 448–asparagine 611 form the Helicase C-terminal domain. Serine 674 carries the phosphoserine modification.

Belongs to the DEAD box helicase family. DDX24/MAK5 subfamily.

The protein localises to the nucleus. The protein resides in the nucleolus. The enzyme catalyses ATP + H2O = ADP + phosphate + H(+). Functionally, ATP-binding RNA helicase involved in the biogenesis of 60S ribosomal subunits and is required for the normal formation of 25S and 5.8S rRNAs. This Saccharomyces cerevisiae (strain YJM789) (Baker's yeast) protein is ATP-dependent RNA helicase MAK5 (MAK5).